Consider the following 450-residue polypeptide: Probable glucan endo-1,3-beta-glucosidase eglC (450 aa).

The first 18 residues, 1 to 18, serve as a signal peptide directing secretion; the sequence is MQFTHLVALALALATSEA. Glu128 functions as the Proton donor in the catalytic mechanism. Asn183 carries N-linked (GlcNAc...) asparagine glycosylation. The active-site Nucleophile is the Glu239. Asn362 and Asn368 each carry an N-linked (GlcNAc...) asparagine glycan. Low complexity-rich tracts occupy residues 377 to 395 and 405 to 420; these read SSAI…SGSS and ASGQ…SAPS. Positions 377 to 420 are disordered; that stretch reads SSAISGSSSGSAAGSSGSSGSSGSGASGASGQSSSSTGSSSAPS. A lipid anchor (GPI-anchor amidated asparagine) is attached at Asn427. The propeptide at 428–450 is removed in mature form; that stretch reads AASGLSGSICGAVVAVCLALAAL.

It belongs to the glycosyl hydrolase 17 family. In terms of processing, the GPI-anchor is attached to the protein in the endoplasmic reticulum and serves to target the protein to the cell surface. There, the glucosamine-inositol phospholipid moiety is cleaved off and the GPI-modified mannoprotein is covalently attached via its lipidless GPI glycan remnant to the 1,6-beta-glucan of the outer cell wall layer.

The protein localises to the cell membrane. It localises to the secreted. Its subcellular location is the cell wall. The catalysed reaction is Hydrolysis of (1-&gt;3)-beta-D-glucosidic linkages in (1-&gt;3)-beta-D-glucans.. In terms of biological role, glucanases play a role in cell expansion during growth, in cell-cell fusion during mating, and in spore release during sporulation. This enzyme may be involved in beta-glucan degradation and also function biosynthetically as a transglycosylase. This chain is Probable glucan endo-1,3-beta-glucosidase eglC (eglC), found in Aspergillus fumigatus (strain CBS 144.89 / FGSC A1163 / CEA10) (Neosartorya fumigata).